Consider the following 471-residue polypeptide: ATP synthase subunit beta (471 aa).

159-166 (GGAGVGKT) is an ATP binding site.

The protein belongs to the ATPase alpha/beta chains family. As to quaternary structure, F-type ATPases have 2 components, CF(1) - the catalytic core - and CF(0) - the membrane proton channel. CF(1) has five subunits: alpha(3), beta(3), gamma(1), delta(1), epsilon(1). CF(0) has four main subunits: a(1), b(1), b'(1) and c(9-12).

Its subcellular location is the cell membrane. The enzyme catalyses ATP + H2O + 4 H(+)(in) = ADP + phosphate + 5 H(+)(out). Its function is as follows. Produces ATP from ADP in the presence of a proton gradient across the membrane. The catalytic sites are hosted primarily by the beta subunits. This Heliobacterium modesticaldum (strain ATCC 51547 / Ice1) protein is ATP synthase subunit beta.